The primary structure comprises 267 residues: Lectin SfL-1 (267 aa).

A run of 4 repeats spans residues 1–67, 68–135, 136–202, and 203–267. Residues 1–267 form a 4 X approximate tandem repeats region; sequence GRYTVQNQWG…GPIGFKGTAI (267 aa).

Monomer.

In terms of biological role, lectin specific for high mannose N-glycans, recognizes the branched moiety of these glycans. Does not recognize other types of N-glycans or monosaccharides. The protein is Lectin SfL-1 of Solieria filiformis (Red alga).